The primary structure comprises 186 residues: Ribosome-recycling factor (186 aa).

Belongs to the RRF family.

Its subcellular location is the cytoplasm. Its function is as follows. Responsible for the release of ribosomes from messenger RNA at the termination of protein biosynthesis. May increase the efficiency of translation by recycling ribosomes from one round of translation to another. This Porphyromonas gingivalis (strain ATCC BAA-308 / W83) protein is Ribosome-recycling factor.